The primary structure comprises 132 residues: UPF0212 protein PYRAB08340 (132 aa).

The protein belongs to the UPF0212 family.

This is UPF0212 protein PYRAB08340 from Pyrococcus abyssi (strain GE5 / Orsay).